We begin with the raw amino-acid sequence, 218 residues long: Adenylate kinase (218 aa).

Residue glycine 10–threonine 15 participates in ATP binding. The segment at serine 30 to valine 59 is NMP. AMP contacts are provided by residues threonine 31, arginine 36, lysine 57 to valine 59, glycine 85 to arginine 88, and glutamine 92. The LID stretch occupies residues glycine 122–aspartate 159. ATP contacts are provided by residues arginine 123 and threonine 132–tyrosine 133. Residues proline 127–aspartate 147 are disordered. Residues arginine 156 and arginine 167 each contribute to the AMP site. Glycine 203 contributes to the ATP binding site.

This sequence belongs to the adenylate kinase family. As to quaternary structure, monomer.

Its subcellular location is the cytoplasm. The catalysed reaction is AMP + ATP = 2 ADP. The protein operates within purine metabolism; AMP biosynthesis via salvage pathway; AMP from ADP: step 1/1. Functionally, catalyzes the reversible transfer of the terminal phosphate group between ATP and AMP. Plays an important role in cellular energy homeostasis and in adenine nucleotide metabolism. The sequence is that of Adenylate kinase from Paracidovorax citrulli (strain AAC00-1) (Acidovorax citrulli).